The following is a 504-amino-acid chain: ATP synthase subunit alpha (504 aa).

Residue 169–176 (GDRQTGKT) coordinates ATP.

This sequence belongs to the ATPase alpha/beta chains family. In terms of assembly, F-type ATPases have 2 components, CF(1) - the catalytic core - and CF(0) - the membrane proton channel. CF(1) has five subunits: alpha(3), beta(3), gamma(1), delta(1), epsilon(1). CF(0) has three main subunits: a(1), b(2) and c(9-12). The alpha and beta chains form an alternating ring which encloses part of the gamma chain. CF(1) is attached to CF(0) by a central stalk formed by the gamma and epsilon chains, while a peripheral stalk is formed by the delta and b chains.

It is found in the cell membrane. It catalyses the reaction ATP + H2O + 4 H(+)(in) = ADP + phosphate + 5 H(+)(out). Functionally, produces ATP from ADP in the presence of a proton gradient across the membrane. The alpha chain is a regulatory subunit. The protein is ATP synthase subunit alpha of Clostridium botulinum (strain Langeland / NCTC 10281 / Type F).